The chain runs to 107 residues: Nucleoid-associated protein GbCGDNIH1_0260 (107 aa).

Belongs to the YbaB/EbfC family. Homodimer.

It localises to the cytoplasm. The protein resides in the nucleoid. Its function is as follows. Binds to DNA and alters its conformation. May be involved in regulation of gene expression, nucleoid organization and DNA protection. This is Nucleoid-associated protein GbCGDNIH1_0260 from Granulibacter bethesdensis (strain ATCC BAA-1260 / CGDNIH1).